A 641-amino-acid polypeptide reads, in one-letter code: MLV-related proviral Env polyprotein (641 aa).

Residues 1 to 32 (MEGPAFSKPLKDKINPWGPLIVLGILIRAGVS) form the signal peptide. Over 33 to 581 (VQHDSPHQVF…FNRSPWFTTL (549 aa)) the chain is Extracellular. Asparagine 43 and asparagine 58 each carry an N-linked (GlcNAc...) asparagine glycan. 2 disulfides stabilise this stretch: cysteine 109–cysteine 126 and cysteine 118–cysteine 131. Positions 256–281 (RPPQPPPPGAASIVPETAPPSQQPGT) are disordered. An N-linked (GlcNAc...) asparagine glycan is attached at asparagine 297. 6 disulfides stabilise this stretch: cysteine 307–cysteine 310, cysteine 307–cysteine 534, cysteine 337–cysteine 391, cysteine 356–cysteine 368, cysteine 398–cysteine 411, and cysteine 526–cysteine 533. Positions 307–310 (CWLC) match the CXXC motif. An N-linked (GlcNAc...) asparagine glycan is attached at asparagine 336. Asparagine 369 carries N-linked (GlcNAc...) asparagine glycosylation. The segment at 443-463 (VSLTLALLLGGLTMGGIAAGV) is fusion peptide. Coiled-coil stretches lie at residues 471–520 (VATK…LLFL) and 530–566 (KEECCFYADHTGVVRDSMAKLRERLNQRQKLFESGQG). The interval 509–525 (LQNRRGLDLLFLKEGGL) is immunosuppression. The short motif at 526-534 (CAALKEECC) is the CX6CC element. The helical transmembrane segment at 582-602 (ISTIMGPLIILLLILLFGPCI) threads the bilayer. Cysteine 601 is lipidated: S-palmitoyl cysteine. The Cytoplasmic segment spans residues 603-641 (LNRLVQFVKDRISVVQALVLTQQYHQLKSIDPEEVESRE). Positions 626–629 (YHQL) match the YXXL motif; contains endocytosis signal motif.

In terms of assembly, the mature envelope protein (Env) consists of a trimer of SU-TM heterodimers attached by a labile interchain disulfide bond. Specific enzymatic cleavages in vivo yield mature proteins. Envelope glycoproteins are synthesized as an inactive precursor that is N-glycosylated and processed likely by host cell furin or by a furin-like protease in the Golgi to yield the mature SU and TM proteins. The cleavage site between SU and TM requires the minimal sequence [KR]-X-[KR]-R. The R-peptide is released from the C-terminus of the cytoplasmic tail of the TM protein upon particle formation as a result of proteolytic cleavage by the viral protease. Cleavage of this peptide is required for TM to become fusogenic. In terms of processing, the CXXC motif is highly conserved across a broad range of retroviral envelope proteins. It is thought to participate in the formation of a labile disulfide bond possibly with the CX6CC motif present in the transmembrane protein. Isomerization of the intersubunit disulfide bond to an SU intrachain disulfide bond is thought to occur upon receptor recognition in order to allow membrane fusion. Post-translationally, the transmembrane protein is palmitoylated. The R-peptide is palmitoylated.

It localises to the virion membrane. Its subcellular location is the cell membrane. The surface protein (SU) attaches the virus to the host cell by binding to its receptor. This interaction triggers the refolding of the transmembrane protein (TM) and is thought to activate its fusogenic potential by unmasking its fusion peptide. Fusion occurs at the host cell plasma membrane. In terms of biological role, the transmembrane protein (TM) acts as a class I viral fusion protein. Under the current model, the protein has at least 3 conformational states: pre-fusion native state, pre-hairpin intermediate state, and post-fusion hairpin state. During viral and target cell membrane fusion, the coiled coil regions (heptad repeats) assume a trimer-of-hairpins structure, positioning the fusion peptide in close proximity to the C-terminal region of the ectodomain. The formation of this structure appears to drive apposition and subsequent fusion of viral and target cell membranes. Membranes fusion leads to delivery of the nucleocapsid into the cytoplasm. The sequence is that of MLV-related proviral Env polyprotein from Mus musculus (Mouse).